Here is a 322-residue protein sequence, read N- to C-terminus: Undecaprenyl-phosphate 4-deoxy-4-formamido-L-arabinose transferase (322 aa).

At 1-235 (MFEIHPVKKV…TCLTTTPLRM (235 aa)) the chain is on the cytoplasmic side. Residues 236–256 (LSLLGSIIAIGGFSIAVLLVI) traverse the membrane as a helical segment. Residues 257 to 269 (LRLTFGPQWAAEG) are Periplasmic-facing. The chain crosses the membrane as a helical span at residues 270–290 (VFMLFAVLFTFIGAQFIGMGL). The Cytoplasmic segment spans residues 291 to 322 (LGEYIGRIYTDVRARPRYFVQQVIRPSSKENE).

It belongs to the glycosyltransferase 2 family.

The protein localises to the cell inner membrane. The enzyme catalyses UDP-4-deoxy-4-formamido-beta-L-arabinose + di-trans,octa-cis-undecaprenyl phosphate = 4-deoxy-4-formamido-alpha-L-arabinopyranosyl di-trans,octa-cis-undecaprenyl phosphate + UDP. The protein operates within glycolipid biosynthesis; 4-amino-4-deoxy-alpha-L-arabinose undecaprenyl phosphate biosynthesis; 4-amino-4-deoxy-alpha-L-arabinose undecaprenyl phosphate from UDP-4-deoxy-4-formamido-beta-L-arabinose and undecaprenyl phosphate: step 1/2. It functions in the pathway bacterial outer membrane biogenesis; lipopolysaccharide biosynthesis. In terms of biological role, catalyzes the transfer of 4-deoxy-4-formamido-L-arabinose from UDP to undecaprenyl phosphate. The modified arabinose is attached to lipid A and is required for resistance to polymyxin and cationic antimicrobial peptides. This chain is Undecaprenyl-phosphate 4-deoxy-4-formamido-L-arabinose transferase, found in Shigella flexneri serotype 5b (strain 8401).